We begin with the raw amino-acid sequence, 385 residues long: Nonsense-mediated mRNA decay factor SMG9 (385 aa).

The disordered stretch occupies residues 1–32 (MKKVEILKTSRPSSAGGAARPSTASPTHGAPK).

This sequence belongs to the SMG9 family.

Its function is as follows. Involved in nonsense-mediated decay (NMD) of mRNAs containing premature stop codons. Probable component of kinase complex containing smg-1 and recruited to stalled ribosomes. The chain is Nonsense-mediated mRNA decay factor SMG9 (smg-9) from Caenorhabditis elegans.